An 89-amino-acid polypeptide reads, in one-letter code: Small ribosomal subunit protein uS19 (89 aa).

It belongs to the universal ribosomal protein uS19 family.

In terms of biological role, protein S19 forms a complex with S13 that binds strongly to the 16S ribosomal RNA. This chain is Small ribosomal subunit protein uS19, found in Azobacteroides pseudotrichonymphae genomovar. CFP2.